Consider the following 505-residue polypeptide: AMP phosphorylase (505 aa).

Residues Gly169, 195-200 (SRAITG), and Thr204 contribute to the AMP site. Residue Asp257 is the Proton donor of the active site. AMP is bound by residues Ser265 and Lys289.

The protein belongs to the thymidine/pyrimidine-nucleoside phosphorylase family. Type 2 subfamily.

It carries out the reaction AMP + phosphate = alpha-D-ribose 1,5-bisphosphate + adenine. The catalysed reaction is CMP + phosphate = cytosine + alpha-D-ribose 1,5-bisphosphate. The enzyme catalyses UMP + phosphate = alpha-D-ribose 1,5-bisphosphate + uracil. Functionally, catalyzes the conversion of AMP and phosphate to adenine and ribose 1,5-bisphosphate (R15P). Exhibits phosphorylase activity toward CMP and UMP in addition to AMP. Functions in an archaeal AMP degradation pathway, together with R15P isomerase and RubisCO. This chain is AMP phosphorylase, found in Methanocorpusculum labreanum (strain ATCC 43576 / DSM 4855 / Z).